The chain runs to 575 residues: CCR4-NOT transcription complex subunit 4 (575 aa).

The RING-type; degenerate zinc finger occupies 14–57 (CPLCMEPLEIDDINFFPCTCGYQICRFCWHRIRTDENGLCPACR). The stretch at 68 to 104 (KPLSQEELQRIKNEKKQKQNERKQKISENRKHLASVR) forms a coiled coil. Serine 71 carries the post-translational modification Phosphoserine. Residues 109–189 (NLVFVVGLSQ…VVDGRTLKAS (81 aa)) enclose the RRM domain. The C3H1-type zinc finger occupies 190-217 (LGTTKYCSYFLKNMQCPKPDCMYLHELG). Disordered regions lie at residues 256–372 (TGSV…EPQS) and 424–458 (SVQD…HPAA). The span at 281–299 (DSLSIGNGDNSQQISNSDT) shows a compositional bias: polar residues. At serine 301 the chain carries Phosphoserine. The segment covering 307–322 (SKSNPVIPISSSNHSA) has biased composition (polar residues). The residue at position 324 (serine 324) is a Phosphoserine. Pro residues predominate over residues 345 to 356 (NPIPSGLPPFPS). Residues 428-441 (QPSLSPTSLQNSSS) are compositionally biased toward low complexity. A Phosphoserine modification is found at serine 432. Asymmetric dimethylarginine occurs at positions 475 and 483. Position 490 is a phosphoserine (serine 490). Residue arginine 497 is modified to Asymmetric dimethylarginine. Residues 553-575 (PLSTSSHSLQQGQQPTSLHTTVA) form a disordered region.

Interacts with CNOT1 via its C-terminus but does not stably associate with the CCR4-NOT complex. Interacts (via RING domain) with UBE2D2. Interacts with ABCE1, PINK1 and PELO. In terms of processing, autoubiquitinated.

Its subcellular location is the cytoplasm. It is found in the nucleus. The enzyme catalyses S-ubiquitinyl-[E2 ubiquitin-conjugating enzyme]-L-cysteine + [acceptor protein]-L-lysine = [E2 ubiquitin-conjugating enzyme]-L-cysteine + N(6)-ubiquitinyl-[acceptor protein]-L-lysine.. Its pathway is protein modification; protein ubiquitination. Has E3 ubiquitin ligase activity, promoting ubiquitination and degradation of target proteins. Involved in activation of the JAK/STAT pathway. Catalyzes ubiquitination of methylated RBM15. Plays a role in quality control of translation of mitochondrial outer membrane-localized mRNA. As part of the PINK1-regulated signaling, upon mitochondria damage, ubiquitinates ABCE1 and thereby recruits autophagy receptors to the mitochondrial outer membrane to initiate mitophagy. In Homo sapiens (Human), this protein is CCR4-NOT transcription complex subunit 4 (CNOT4).